A 497-amino-acid polypeptide reads, in one-letter code: Signal recognition particle receptor FtsY (497 aa).

Disordered stretches follow at residues 1–63 (MAKE…TEAE) and 79–130 (AESE…EWQA). The segment covering 87 to 96 (EAEVVAQPEP) has biased composition (low complexity). GTP is bound by residues 300–307 (GVNGVGKT), 382–386 (DTAGR), and 446–449 (TKLD).

It belongs to the GTP-binding SRP family. FtsY subfamily. In terms of assembly, part of the signal recognition particle protein translocation system, which is composed of SRP and FtsY. SRP is a ribonucleoprotein composed of Ffh and a 4.5S RNA molecule. Binds to SecY. In terms of processing, proteolytically cleaved. The cleavage may regulate function and subcellular location of FtsY. Full-length FtsY is found primarily associated with the membrane, while cleaved protein is predominantly present in the cytoplasm.

It is found in the cell inner membrane. Its subcellular location is the cytoplasm. The catalysed reaction is GTP + H2O = GDP + phosphate + H(+). Conformation of the Ffh-FtsY complex and regulation of its GTPase activity are modulated by the 4.5S RNA. Formation of the FfH-FtsY complex leads to a mutual stimulation of both GTPases. In terms of biological role, involved in targeting and insertion of nascent membrane proteins into the cytoplasmic membrane. Acts as a receptor for the complex formed by the signal recognition particle (SRP) and the ribosome-nascent chain (RNC). Interaction with SRP-RNC leads to the transfer of the RNC complex to the Sec translocase for insertion into the membrane, the hydrolysis of GTP by both Ffh and FtsY, and the dissociation of the SRP-FtsY complex into the individual components. This chain is Signal recognition particle receptor FtsY, found in Escherichia coli (strain K12).